The chain runs to 267 residues: uncharacterized protein (267 aa).

It belongs to the lin-8 family.

This is an uncharacterized protein from Caenorhabditis elegans.